Reading from the N-terminus, the 231-residue chain is ATP phosphoribosyltransferase (231 aa).

Belongs to the ATP phosphoribosyltransferase family. Short subfamily. In terms of assembly, heteromultimer composed of HisG and HisZ subunits.

It is found in the cytoplasm. It catalyses the reaction 1-(5-phospho-beta-D-ribosyl)-ATP + diphosphate = 5-phospho-alpha-D-ribose 1-diphosphate + ATP. Its pathway is amino-acid biosynthesis; L-histidine biosynthesis; L-histidine from 5-phospho-alpha-D-ribose 1-diphosphate: step 1/9. Catalyzes the condensation of ATP and 5-phosphoribose 1-diphosphate to form N'-(5'-phosphoribosyl)-ATP (PR-ATP). Has a crucial role in the pathway because the rate of histidine biosynthesis seems to be controlled primarily by regulation of HisG enzymatic activity. This is ATP phosphoribosyltransferase from Brucella ovis (strain ATCC 25840 / 63/290 / NCTC 10512).